Reading from the N-terminus, the 289-residue chain is 4-diphosphocytidyl-2-C-methyl-D-erythritol kinase (289 aa).

Lys11 is a catalytic residue. Position 95–105 (95–105) interacts with ATP; sequence PMGGGIGGGSS. Residue Asp137 is part of the active site.

The protein belongs to the GHMP kinase family. IspE subfamily.

The catalysed reaction is 4-CDP-2-C-methyl-D-erythritol + ATP = 4-CDP-2-C-methyl-D-erythritol 2-phosphate + ADP + H(+). It functions in the pathway isoprenoid biosynthesis; isopentenyl diphosphate biosynthesis via DXP pathway; isopentenyl diphosphate from 1-deoxy-D-xylulose 5-phosphate: step 3/6. Functionally, catalyzes the phosphorylation of the position 2 hydroxy group of 4-diphosphocytidyl-2C-methyl-D-erythritol. In Aeromonas salmonicida (strain A449), this protein is 4-diphosphocytidyl-2-C-methyl-D-erythritol kinase.